Reading from the N-terminus, the 660-residue chain is Macrolide export ATP-binding/permease protein MacB (660 aa).

Positions 10–248 (LVLENIVRKF…AKGQALQGKQ (239 aa)) constitute an ABC transporter domain. Residue 46–53 (GASGSGKS) coordinates ATP. 4 helical membrane passes run 285–305 (FLTMLGVIIGIAAIIAMVALG), 532–552 (ILTLLVSSIAAISLIVGGIGV), 593–613 (IIGGGVGILFGLSIGGLFVLF), and 625–645 (SIIISLTFSTLIGICFGFSPA).

Belongs to the ABC transporter superfamily. Macrolide exporter (TC 3.A.1.122) family. As to quaternary structure, homodimer.

The protein resides in the cell inner membrane. Its function is as follows. Non-canonical ABC transporter that contains transmembrane domains (TMD), which form a pore in the inner membrane, and an ATP-binding domain (NBD), which is responsible for energy generation. Confers resistance against macrolides. The protein is Macrolide export ATP-binding/permease protein MacB of Bartonella quintana (strain Toulouse) (Rochalimaea quintana).